We begin with the raw amino-acid sequence, 481 residues long: Proline--tRNA ligase (481 aa).

It belongs to the class-II aminoacyl-tRNA synthetase family. ProS type 3 subfamily. As to quaternary structure, homodimer.

The protein resides in the cytoplasm. The enzyme catalyses tRNA(Pro) + L-proline + ATP = L-prolyl-tRNA(Pro) + AMP + diphosphate. Functionally, catalyzes the attachment of proline to tRNA(Pro) in a two-step reaction: proline is first activated by ATP to form Pro-AMP and then transferred to the acceptor end of tRNA(Pro). The protein is Proline--tRNA ligase of Chloroherpeton thalassium (strain ATCC 35110 / GB-78).